A 474-amino-acid chain; its full sequence is 3-isopropylmalate dehydratase large subunit (474 aa).

Positions 355, 415, and 418 each coordinate [4Fe-4S] cluster.

Belongs to the aconitase/IPM isomerase family. LeuC type 1 subfamily. In terms of assembly, heterodimer of LeuC and LeuD. Requires [4Fe-4S] cluster as cofactor.

It carries out the reaction (2R,3S)-3-isopropylmalate = (2S)-2-isopropylmalate. Its pathway is amino-acid biosynthesis; L-leucine biosynthesis; L-leucine from 3-methyl-2-oxobutanoate: step 2/4. Catalyzes the isomerization between 2-isopropylmalate and 3-isopropylmalate, via the formation of 2-isopropylmaleate. This chain is 3-isopropylmalate dehydratase large subunit, found in Shewanella sp. (strain MR-4).